The chain runs to 912 residues: Transferrin-binding protein A (912 aa).

Residues 1-23 (MTKKPYFRLSIISCLLISCYVKA) form the signal peptide. The TonB box motif lies at 50-57 (ETISVTAE). The TBDR plug domain occupies 63–188 (KDNEVTGLGK…LAGSVTFQSK (126 aa)). Residues 199-912 (SWGIQTKNAY…NYTLTLEMKF (714 aa)) enclose the TBDR beta-barrel domain. Positions 895–912 (TRYAASGRNYTLTLEMKF) match the TonB C-terminal box motif.

Belongs to the TonB-dependent receptor family.

The protein resides in the cell outer membrane. Haemophilus acquires iron by extracting it from serum transferrin (TF) in its human host. Acts as a transferrin receptor and is required for transferrin utilization. This Haemophilus influenzae (strain ATCC 51907 / DSM 11121 / KW20 / Rd) protein is Transferrin-binding protein A.